The following is a 173-amino-acid chain: Insertion element IS1397 uncharacterized 20.1 kDa protein (173 aa).

Positions Lys115–Met135 are disordered.

The protein belongs to the IS150/IS1296 orfA family.

The sequence is that of Insertion element IS1397 uncharacterized 20.1 kDa protein from Escherichia coli.